A 428-amino-acid polypeptide reads, in one-letter code: Flotillin-1 (428 aa).

Phosphoserine occurs at positions 19, 163, and 385. Residue Thr387 is modified to Phosphothreonine.

The protein belongs to the band 7/mec-2 family. Flotillin subfamily. Heterooligomeric complex of flotillin-1 and flotillin-2 and caveolin-1 and caveolin-2. Interacts with ECPAS. In terms of tissue distribution, high expression in brain, white adipose tissue, heart muscle, skeletal muscle and lung. Low expression in spleen, liver and testis.

The protein resides in the cell membrane. It is found in the endosome. The protein localises to the membrane. Its subcellular location is the caveola. It localises to the melanosome. The protein resides in the membrane raft. In terms of biological role, may act as a scaffolding protein within caveolar membranes, functionally participating in formation of caveolae or caveolae-like vesicles. In Mus musculus (Mouse), this protein is Flotillin-1 (Flot1).